Consider the following 737-residue polypeptide: Catalase-peroxidase 2 (737 aa).

The disordered stretch occupies residues 1–33; it reads MPEATEHPPIGEAQTEPAQSGCPMVIKPPVEGG. The tryptophyl-tyrosyl-methioninium (Trp-Tyr) (with M-261) cross-link spans 107 to 235; that stretch reads WHAAGTYRVQ…LGASHMGLIY (129 aa). Catalysis depends on H108, which acts as the Proton acceptor. The segment at residues 235–261 is a cross-link (tryptophyl-tyrosyl-methioninium (Tyr-Met) (with W-107)); sequence YVNPEGPEGNPDPIAAAIDIRETFGRM. H276 is a heme binding site.

This sequence belongs to the peroxidase family. Peroxidase/catalase subfamily. Homodimer or homotetramer. It depends on heme b as a cofactor. Post-translationally, formation of the three residue Trp-Tyr-Met cross-link is important for the catalase, but not the peroxidase activity of the enzyme.

The enzyme catalyses H2O2 + AH2 = A + 2 H2O. The catalysed reaction is 2 H2O2 = O2 + 2 H2O. Bifunctional enzyme with both catalase and broad-spectrum peroxidase activity. This Mycolicibacterium vanbaalenii (strain DSM 7251 / JCM 13017 / BCRC 16820 / KCTC 9966 / NRRL B-24157 / PYR-1) (Mycobacterium vanbaalenii) protein is Catalase-peroxidase 2.